A 142-amino-acid chain; its full sequence is MAIIIGADKAGQELKEVIKDYLKEGKYEVVDVSENEVRDFVDTTLAVAKEVNASEDNLGIVIDAYGVGSFMVATKIKGMVAAEVSDERSAYMTRGHNNARIITLGSEISAPGIAKNIIKGFVEGKYDGGRHQVRVDMLNKMC.

It belongs to the LacAB/RpiB family. In terms of assembly, heteromultimeric protein consisting of LacA and LacB.

The catalysed reaction is aldehydo-D-galactose 6-phosphate = keto-D-tagatose 6-phosphate. Its pathway is carbohydrate metabolism; D-galactose 6-phosphate degradation; D-tagatose 6-phosphate from D-galactose 6-phosphate: step 1/1. This Streptococcus pyogenes serotype M3 (strain ATCC BAA-595 / MGAS315) protein is Galactose-6-phosphate isomerase subunit LacA 2.